The chain runs to 95 residues: Aspartyl/glutamyl-tRNA(Asn/Gln) amidotransferase subunit C (95 aa).

Belongs to the GatC family. In terms of assembly, heterotrimer of A, B and C subunits.

It catalyses the reaction L-glutamyl-tRNA(Gln) + L-glutamine + ATP + H2O = L-glutaminyl-tRNA(Gln) + L-glutamate + ADP + phosphate + H(+). The catalysed reaction is L-aspartyl-tRNA(Asn) + L-glutamine + ATP + H2O = L-asparaginyl-tRNA(Asn) + L-glutamate + ADP + phosphate + 2 H(+). Allows the formation of correctly charged Asn-tRNA(Asn) or Gln-tRNA(Gln) through the transamidation of misacylated Asp-tRNA(Asn) or Glu-tRNA(Gln) in organisms which lack either or both of asparaginyl-tRNA or glutaminyl-tRNA synthetases. The reaction takes place in the presence of glutamine and ATP through an activated phospho-Asp-tRNA(Asn) or phospho-Glu-tRNA(Gln). This chain is Aspartyl/glutamyl-tRNA(Asn/Gln) amidotransferase subunit C, found in Geotalea daltonii (strain DSM 22248 / JCM 15807 / FRC-32) (Geobacter daltonii).